The sequence spans 698 residues: Effector protein AvrPphDPgy (698 aa).

The span at Met1–Pro15 shows a compositional bias: polar residues. Disordered stretches follow at residues Met1–Arg36 and Val171–Ser200. Low complexity predominate over residues Asp172–Pro181.

It is found in the secreted. Its function is as follows. Effector protein involved in non-host recognition. This Pseudomonas savastanoi pv. glycinea (Pseudomonas syringae pv. glycinea) protein is Effector protein AvrPphDPgy (avrPphDPgy).